We begin with the raw amino-acid sequence, 104 residues long: NADH-quinone oxidoreductase subunit K (104 aa).

A run of 3 helical transmembrane segments spans residues 4-24 (VPAS…LFGA), 31-51 (VIVL…LVAF), and 67-87 (LFTM…LIAL).

This sequence belongs to the complex I subunit 4L family. As to quaternary structure, NDH-1 is composed of 14 different subunits. Subunits NuoA, H, J, K, L, M, N constitute the membrane sector of the complex.

It is found in the cell membrane. It carries out the reaction a quinone + NADH + 5 H(+)(in) = a quinol + NAD(+) + 4 H(+)(out). NDH-1 shuttles electrons from NADH, via FMN and iron-sulfur (Fe-S) centers, to quinones in the respiratory chain. The immediate electron acceptor for the enzyme in this species is believed to be a menaquinone. Couples the redox reaction to proton translocation (for every two electrons transferred, four hydrogen ions are translocated across the cytoplasmic membrane), and thus conserves the redox energy in a proton gradient. The sequence is that of NADH-quinone oxidoreductase subunit K from Bacillus cereus (strain ATCC 14579 / DSM 31 / CCUG 7414 / JCM 2152 / NBRC 15305 / NCIMB 9373 / NCTC 2599 / NRRL B-3711).